The primary structure comprises 229 residues: MAKKSKALRAAIEKIDATKAYSVEEAVALAKETSFAKFDATVEVAYNLNIDVKKSDQQIRGAMVLPNGTGKTARVLVFAKGAKAEEATAAGADFVGSDELVAKINGGWLDFDVVIATPDMMAVVGRLGRVLGPRNLMPNPKTGTVTMDVTKAVGESKAGKVNYRADKAGNVHVPIGKVSFDTEKLVENFKALNTVIAAAKPAASKGAYITNLSVTTTMGPGVKVDSASF.

The protein belongs to the universal ribosomal protein uL1 family. In terms of assembly, part of the 50S ribosomal subunit.

Functionally, binds directly to 23S rRNA. The L1 stalk is quite mobile in the ribosome, and is involved in E site tRNA release. In terms of biological role, protein L1 is also a translational repressor protein, it controls the translation of the L11 operon by binding to its mRNA. The chain is Large ribosomal subunit protein uL1 from Lactococcus lactis subsp. cremoris (strain MG1363).